A 59-amino-acid polypeptide reads, in one-letter code: Large ribosomal subunit protein uL30 (59 aa).

Belongs to the universal ribosomal protein uL30 family. As to quaternary structure, part of the 50S ribosomal subunit.

In Mycolicibacterium vanbaalenii (strain DSM 7251 / JCM 13017 / BCRC 16820 / KCTC 9966 / NRRL B-24157 / PYR-1) (Mycobacterium vanbaalenii), this protein is Large ribosomal subunit protein uL30.